Consider the following 570-residue polypeptide: High-affinity hexose transporter HXT7 (570 aa).

Over 1–60 the chain is Cytoplasmic; sequence MSQDAAIAEQTPVEHLSAVDSASHSVLSTPSNKAERDEIKAYGEGEEHEPVVEIPKRPAS. Residues 61–81 traverse the membrane as a helical segment; sequence AYVTVSIMCIMIAFGGFVFGW. The Extracellular portion of the chain corresponds to 82 to 116; that stretch reads DTGTISGFINQTDFIRRFGMKHKDGTNYLSKVRTG. An N-linked (GlcNAc...) asparagine glycan is attached at Asn91. Residues 117 to 137 form a helical membrane-spanning segment; sequence LIVSIFNIGCAIGGIILSKLG. At 138–143 the chain is on the cytoplasmic side; that stretch reads DMYGRK. A helical transmembrane segment spans residues 144 to 164; the sequence is VGLIVVVVIYIIGIIIQIASI. Residues 165 to 174 are Extracellular-facing; it reads NKWYQYFIGR. A helical membrane pass occupies residues 175-195; the sequence is IISGLGVGGIAVLSPMLISEV. Over 196–201 the chain is Cytoplasmic; that stretch reads SPKHLR. The chain crosses the membrane as a helical span at residues 202–222; it reads GTLVSCYQLMITAGIFLGYCT. The Extracellular segment spans residues 223-236; it reads NFGTKNYSNSVQWR. N-linked (GlcNAc...) asparagine glycosylation occurs at Asn228. Residues 237-257 traverse the membrane as a helical segment; sequence VPLGLCFAWALFMIGGMTFVP. Residues 258–340 are Cytoplasmic-facing; it reads ESPRYLAEVG…IQSLQQLTGD (83 aa). Residues 341–357 form a helical membrane-spanning segment; sequence NYFFYYGTTIFKAVGLS. Over 358-363 the chain is Extracellular; it reads DSFETS. A helical membrane pass occupies residues 364-381; that stretch reads IVLGIVNFASTFVGIYVV. Topologically, residues 382-388 are cytoplasmic; sequence ERYGRRT. A helical transmembrane segment spans residues 389 to 409; sequence CLLWGAASMTACMVVYASVGV. Residues 410–431 lie on the Extracellular side of the membrane; that stretch reads TRLWPNGQDQPSSKGAGNCMIV. Residues 432 to 452 traverse the membrane as a helical segment; that stretch reads FACFYIFCFATTWAPIPYVVV. Topologically, residues 453-469 are cytoplasmic; the sequence is SETFPLRVKSKAMSIAT. A helical transmembrane segment spans residues 470–490; that stretch reads AANWLWGFLIGFFTPFITGAI. A topological domain (extracellular) is located at residue Asn491. A helical membrane pass occupies residues 492-512; it reads FYYGYVFMGCLVFMFFYVLLV. The Cytoplasmic portion of the chain corresponds to 513-570; the sequence is VPETKGLTLEEVNTMWEEGVLPWKSASWVPPSRRGANYDAEEMTHDDKPLYKRMFSTK. At Thr556 the chain carries Phosphothreonine. Lys560 is covalently cross-linked (Glycyl lysine isopeptide (Lys-Gly) (interchain with G-Cter in ubiquitin)).

It belongs to the major facilitator superfamily. Sugar transporter (TC 2.A.1.1) family.

It is found in the membrane. High-affinity glucose transporter. This is High-affinity hexose transporter HXT7 (HXT7) from Saccharomyces cerevisiae (strain ATCC 204508 / S288c) (Baker's yeast).